Consider the following 501-residue polypeptide: Cytochrome P450 90A3 (501 aa).

The chain crosses the membrane as a helical span at residues 2 to 22 (AAAALLLLAAAAAIVVVAMVL). C446 provides a ligand contact to heme.

This sequence belongs to the cytochrome P450 family. Heme serves as cofactor. Highly expressed in shoot apex and inflorenscence. Expressed in roots, stems, leaf blades and leaf sheaths.

It localises to the membrane. It participates in plant hormone biosynthesis; brassinosteroid biosynthesis. Its function is as follows. Catalyzes the C23-alpha-hydroxylation step in brassinosteroid biosynthesis. Converts 6-deoxocathasterone (6-deoxoCT) to 6-deoxoteasterone (6-deoxoTE) in the late C6-oxidation pathway and cathasterone (CT) to teasterone (TE) in the early C6-oxidation pathway of brassinolide (BL) biosynthesis. In Oryza sativa subsp. japonica (Rice), this protein is Cytochrome P450 90A3.